We begin with the raw amino-acid sequence, 546 residues long: Chaperonin GroEL (546 aa).

Residues 29 to 32, Lys50, 86 to 90, Gly414, and Asp492 contribute to the ATP site; these read TMGP and DGTTT.

This sequence belongs to the chaperonin (HSP60) family. As to quaternary structure, forms a cylinder of 14 subunits composed of two heptameric rings stacked back-to-back. Interacts with the co-chaperonin GroES.

The protein localises to the cytoplasm. It carries out the reaction ATP + H2O + a folded polypeptide = ADP + phosphate + an unfolded polypeptide.. In terms of biological role, together with its co-chaperonin GroES, plays an essential role in assisting protein folding. The GroEL-GroES system forms a nano-cage that allows encapsulation of the non-native substrate proteins and provides a physical environment optimized to promote and accelerate protein folding. In Helicobacter pylori (strain G27), this protein is Chaperonin GroEL.